The primary structure comprises 263 residues: Ribonuclease 3 (263 aa).

Residues 1–23 are disordered; that stretch reads MPHSKNQRKHRHHSHSERRRQPK. In terms of domain architecture, RNase III spans 35-164; it reads FDELLRTLNL…FVGALYLDQG (130 aa). E77 lines the Mg(2+) pocket. Residue D81 is part of the active site. Residues D150 and E153 each coordinate Mg(2+). Residue E153 is part of the active site. The DRBM domain occupies 190–259; the sequence is DFKSQLQEFI…AQQALITLSQ (70 aa).

This sequence belongs to the ribonuclease III family. Homodimer. The cofactor is Mg(2+).

It is found in the cytoplasm. The catalysed reaction is Endonucleolytic cleavage to 5'-phosphomonoester.. Functionally, digests double-stranded RNA. Involved in the processing of primary rRNA transcript to yield the immediate precursors to the large and small rRNAs (23S and 16S). Processes some mRNAs, and tRNAs when they are encoded in the rRNA operon. Processes pre-crRNA and tracrRNA of type II CRISPR loci if present in the organism. This chain is Ribonuclease 3, found in Halalkalibacterium halodurans (strain ATCC BAA-125 / DSM 18197 / FERM 7344 / JCM 9153 / C-125) (Bacillus halodurans).